A 306-amino-acid chain; its full sequence is LysM and putative peptidoglycan-binding domain-containing protein 3 (306 aa).

Topologically, residues 1–217 (MAGRHQNRSF…PYYGADWGIG (217 aa)) are extracellular. N-linked (GlcNAc...) asparagine glycosylation occurs at Asn-7. Position 55 is a phosphoserine (Ser-55). A LysM domain is found at 65–109 (LTKDIQEGDTLNAIALQYCCTVADIKRVNNLISDQDFFALRSIKI). A helical membrane pass occupies residues 218–238 (WWTAVVIMLIVGIITPVFYLL). The Cytoplasmic portion of the chain corresponds to 239–306 (YYEILAKVDV…SQSPAAQQET (68 aa)).

It is found in the cell membrane. Its subcellular location is the golgi apparatus. Its function is as follows. Essential for Golgi structural integrity. The chain is LysM and putative peptidoglycan-binding domain-containing protein 3 (LYSMD3) from Homo sapiens (Human).